We begin with the raw amino-acid sequence, 489 residues long: Hydantoin permease (489 aa).

A run of 12 helical transmembrane segments spans residues 30–50, 58–78, 104–124, 144–164, 167–187, 207–227, 258–278, 299–321, 339–359, 362–382, 405–424, and 428–445; these read FSLAAIWFAMAIQVAIFIAAG, VWQVIVAIAAGCTIAVILLFF, LIPITLKALLSLFWFGFQTWL, LWIVIFGAIQVVTTFYGITFI, MNVFASPVLLAMGVYMVYLML, MPFSTAIMIFVGGWIAVVVSI, LGMVPASIIFGFIGAASMVLV, AILFQVFVLLATWSTNPAANLLS, GVIVSAVVGLLMMPWQFAGVL, FLNLLASALGPLAGIMISDYF, RGVNWVALAVYAVALAVSFL, and LMFVTGLIAALLLHIPAM. Ala38 and Ile41 together coordinate Na(+). Gln121 contacts substrate. Gly219 is a binding site for substrate. Residues Ala309, Ser312, and Thr313 each contribute to the Na(+) site. Residue Asn318 coordinates substrate. The interval 468–489 is disordered; sequence PIGPVAPADESATANTKEQNQR. Over residues 479 to 489 the composition is skewed to polar residues; that stretch reads ATANTKEQNQR.

This sequence belongs to the purine-cytosine permease (2.A.39) family.

Its subcellular location is the membrane. With respect to regulation, inhibited by dinitrophenol, 5-(2-naphthylmethyl)-D-hydantoin (D-NMH), 5-(2-naphthylmethyl)-L-hydantoin (L-NMH), 5-bromovinylhydantoin (BVH) and 5-indolylmethyl-L-hydantoin (L-IMH). The affinity of benzyl-hydantoin is increased over 10-fold in the presence of 15 mM of sodium. In terms of biological role, nucleobase-proton symporter that mediates the sodium-dependent binding and uptake of 5-aryl-substituted hydantoin compounds. 5-indolyl methyl hydantoin and 5-benzyl hydantoin are the preferred substrates, with selectivity for a hydrophobic substituent in position 5 of hydantoin and for the L isomer over the D isomer. In Microbacterium maritypicum (Microbacterium liquefaciens), this protein is Hydantoin permease.